We begin with the raw amino-acid sequence, 57 residues long: UPF0391 membrane protein RB0084 (57 aa).

Transmembrane regions (helical) follow at residues 4 to 24 (WALI…SGVS) and 33 to 53 (ILFY…LAVG).

This sequence belongs to the UPF0391 family.

Its subcellular location is the cell membrane. This is UPF0391 membrane protein RB0084 from Rhizobium meliloti (strain 1021) (Ensifer meliloti).